The primary structure comprises 187 residues: UPF0398 protein SH1465 (187 aa).

It belongs to the UPF0398 family.

In Staphylococcus haemolyticus (strain JCSC1435), this protein is UPF0398 protein SH1465.